Here is a 338-residue protein sequence, read N- to C-terminus: MATPKVGINGFGRIGRIVFRNAIASGDVDVVAVNDPFIETHYAAYMLKYDSTHGRFQGTIETYDEGLIVNGKKIRFFAERDPAAIPWGSAGAAYIVESTGVFTTTEKASAHLKGGAKKVIISAPSADAPMFVMGVNNKEYKTDINVLSNASCTTNCLAPLAKVINDNFGLVEGLMTTVHSYTATQKTVDAPSAKDWRGGRTAAQNIIPSSTGAAKAVGKVIPSLNGKLTGMSMRVPTANVSVVDLTCRTEKAVTYEDIKKTIKAASEEGELKGILGYTEDDIVSTDLIGDAHSSIFDAKAGIALNEHFIKLVSWYDNEWGYSRRVVDLIAYISKVDGQ.

NAD(+) contacts are provided by residues 13–14, Asp35, and Arg80; that span reads RI. Residues 151–153, Thr182, 211–212, and Arg234 contribute to the D-glyceraldehyde 3-phosphate site; these read SCT and TG. The active-site Nucleophile is Cys152. Asn317 lines the NAD(+) pocket.

It belongs to the glyceraldehyde-3-phosphate dehydrogenase family. In terms of assembly, homotetramer.

Its subcellular location is the cytoplasm. The catalysed reaction is D-glyceraldehyde 3-phosphate + phosphate + NAD(+) = (2R)-3-phospho-glyceroyl phosphate + NADH + H(+). It functions in the pathway carbohydrate degradation; glycolysis; pyruvate from D-glyceraldehyde 3-phosphate: step 1/5. The sequence is that of Glyceraldehyde-3-phosphate dehydrogenase (gpdA) from Aspergillus oryzae (strain ATCC 42149 / RIB 40) (Yellow koji mold).